The primary structure comprises 198 residues: Dual specificity protein phosphatase 14 (198 aa).

The 142-residue stretch at 26–167 (GIAQITSSLF…LIDYERQLFG (142 aa)) folds into the Tyrosine-protein phosphatase domain. Catalysis depends on Cys111, which acts as the Phosphocysteine intermediate.

This sequence belongs to the protein-tyrosine phosphatase family. Non-receptor class dual specificity subfamily. Interacts with CD28.

The catalysed reaction is O-phospho-L-tyrosyl-[protein] + H2O = L-tyrosyl-[protein] + phosphate. It carries out the reaction O-phospho-L-seryl-[protein] + H2O = L-seryl-[protein] + phosphate. It catalyses the reaction O-phospho-L-threonyl-[protein] + H2O = L-threonyl-[protein] + phosphate. Its function is as follows. Involved in the inactivation of MAP kinases. Dephosphorylates ERK, JNK and p38 MAP-kinases. Plays a negative role in TCR signaling by dephosphorylating MAP3K7 adapter TAB1 leading to its inactivation. The polypeptide is Dual specificity protein phosphatase 14 (DUSP14) (Bos taurus (Bovine)).